The following is a 291-amino-acid chain: MNSIKLEKNISLSNFTTWGIGGPAEWIAQPKNIEELKYVINWTNKKKIPCSVIGAGSNLLINDKGIKGLSLCMRNFKGIEIDKNNGIIEVLSGEMLPTLARKAAASGLHGFEWAVGIPGTIGGAVVMNAGAQEHCISSYLESITTLSLTGEYQRIKGKDLNFGYRQSLLQNEKLIVVSARLKLASGHAKEIRQVTNENLNHRLKTQPYQAQTCGSVFRNPEPLKAAKLIEELGLKGFRFGGAEISKIHSNFIINANQASSNDVRELIKYVKKRVFDSYGILLETEVKQCGF.

Positions 19–186 (GIGGPAEWIA…VSARLKLASG (168 aa)) constitute an FAD-binding PCMH-type domain. Residue Arg-165 is part of the active site. The active-site Proton donor is the Ser-215. Residue Glu-285 is part of the active site.

Belongs to the MurB family. Requires FAD as cofactor.

The protein resides in the cytoplasm. The catalysed reaction is UDP-N-acetyl-alpha-D-muramate + NADP(+) = UDP-N-acetyl-3-O-(1-carboxyvinyl)-alpha-D-glucosamine + NADPH + H(+). Its pathway is cell wall biogenesis; peptidoglycan biosynthesis. Its function is as follows. Cell wall formation. This chain is UDP-N-acetylenolpyruvoylglucosamine reductase, found in Prochlorococcus marinus (strain NATL2A).